Reading from the N-terminus, the 246-residue chain is 2-deoxyglucose-6-phosphate phosphatase 2 (246 aa).

Catalysis depends on Asp-83, which acts as the Nucleophile. Asp-83 lines the Mg(2+) pocket. Residues Asp-83, Glu-92, and 146–149 (DVKN) contribute to the substrate site. Mg(2+) is bound at residue Asp-183.

Belongs to the HAD-like hydrolase superfamily. DOG/GPP family. The cofactor is Mg(2+).

It catalyses the reaction 2-deoxy-D-glucose 6-phosphate + H2O = 2-deoxy-D-glucose + phosphate. Phosphatase that is active on 2-deoxy-D-glucose 6-phosphate (2-DOG-6P), but not very active on fructose-1-P. This Saccharomyces cerevisiae (strain ATCC 204508 / S288c) (Baker's yeast) protein is 2-deoxyglucose-6-phosphate phosphatase 2.